The primary structure comprises 101 residues: Large ribosomal subunit protein uL24 (101 aa).

It belongs to the universal ribosomal protein uL24 family. Part of the 50S ribosomal subunit.

Its function is as follows. One of two assembly initiator proteins, it binds directly to the 5'-end of the 23S rRNA, where it nucleates assembly of the 50S subunit. Functionally, one of the proteins that surrounds the polypeptide exit tunnel on the outside of the subunit. This is Large ribosomal subunit protein uL24 from Borreliella burgdorferi (strain ATCC 35210 / DSM 4680 / CIP 102532 / B31) (Borrelia burgdorferi).